The following is a 160-amino-acid chain: Transmembrane protein 220 (160 aa).

A run of 5 helical transmembrane segments spans residues 3 to 23 (PALW…AALV), 30 to 50 (AEVW…VGLN), 62 to 82 (ISAI…SYLL), 100 to 120 (GLVI…NPVG), and 125 to 145 (LAIA…IYIN).

It localises to the membrane. The chain is Transmembrane protein 220 (TMEM220) from Homo sapiens (Human).